We begin with the raw amino-acid sequence, 314 residues long: Dihydropteroate synthase (314 aa).

Residues 10 to 294 (TVICGIINVT…DVASHRMAVE (285 aa)) enclose the Pterin-binding domain. N17 provides a ligand contact to Mg(2+). (7,8-dihydropterin-6-yl)methyl diphosphate-binding positions include T57, D91, N110, D201, K237, and 282-284 (RVH).

This sequence belongs to the DHPS family. In terms of assembly, homodimer or homotrimer. Mg(2+) is required as a cofactor.

The enzyme catalyses (7,8-dihydropterin-6-yl)methyl diphosphate + 4-aminobenzoate = 7,8-dihydropteroate + diphosphate. The protein operates within cofactor biosynthesis; tetrahydrofolate biosynthesis; 7,8-dihydrofolate from 2-amino-4-hydroxy-6-hydroxymethyl-7,8-dihydropteridine diphosphate and 4-aminobenzoate: step 1/2. Functionally, catalyzes the condensation of para-aminobenzoate (pABA) with 6-hydroxymethyl-7,8-dihydropterin diphosphate (DHPt-PP) to form 7,8-dihydropteroate (H2Pte), the immediate precursor of folate derivatives. In Streptococcus pneumoniae serotype 4 (strain ATCC BAA-334 / TIGR4), this protein is Dihydropteroate synthase (sulA).